The sequence spans 646 residues: Phosphomethylpyrimidine synthase (646 aa).

Residues Asn235, Met264, Tyr293, His329, 349–351 (SRG), 390–393 (DGLR), and Glu429 contribute to the substrate site. His433 is a Zn(2+) binding site. Tyr456 is a binding site for substrate. His497 contacts Zn(2+). Positions 577, 580, and 585 each coordinate [4Fe-4S] cluster. The disordered stretch occupies residues 624-646 (KSEEFRATGSELYHPAVHAEADE).

The protein belongs to the ThiC family. Homodimer. [4Fe-4S] cluster is required as a cofactor.

It carries out the reaction 5-amino-1-(5-phospho-beta-D-ribosyl)imidazole + S-adenosyl-L-methionine = 4-amino-2-methyl-5-(phosphooxymethyl)pyrimidine + CO + 5'-deoxyadenosine + formate + L-methionine + 3 H(+). It functions in the pathway cofactor biosynthesis; thiamine diphosphate biosynthesis. Functionally, catalyzes the synthesis of the hydroxymethylpyrimidine phosphate (HMP-P) moiety of thiamine from aminoimidazole ribotide (AIR) in a radical S-adenosyl-L-methionine (SAM)-dependent reaction. This Vibrio parahaemolyticus serotype O3:K6 (strain RIMD 2210633) protein is Phosphomethylpyrimidine synthase.